A 264-amino-acid polypeptide reads, in one-letter code: Transmembrane protein 270 (264 aa).

Helical transmembrane passes span 31 to 51 (HLYR…LGLA), 74 to 94 (LSLA…LLLW), and 133 to 153 (LFLS…LLTW). Polar residues predominate over residues 227–236 (AQEVKSQETS). A disordered region spans residues 227-264 (AQEVKSQETSGPPPQFLIPESSTTESGPLPPQPETPGE). Over residues 254-264 (PLPPQPETPGE) the composition is skewed to pro residues.

Testis.

Its subcellular location is the membrane. This is Transmembrane protein 270 from Mus musculus (Mouse).